Reading from the N-terminus, the 257-residue chain is Phosphonates import ATP-binding protein PhnC (257 aa).

The ABC transporter domain occupies 2–246 (IEFRNVSKVY…KFAEIYGDVV (245 aa)). Residue 35–42 (GLSGAGKS) coordinates ATP.

Belongs to the ABC transporter superfamily. Phosphonates importer (TC 3.A.1.9.1) family. As to quaternary structure, the complex is composed of two ATP-binding proteins (PhnC), two transmembrane proteins (PhnE) and a solute-binding protein (PhnD).

The protein resides in the cell membrane. It carries out the reaction phosphonate(out) + ATP + H2O = phosphonate(in) + ADP + phosphate + H(+). Functionally, part of the ABC transporter complex PhnCDE involved in phosphonates import. Responsible for energy coupling to the transport system. This is Phosphonates import ATP-binding protein PhnC from Bacillus anthracis.